We begin with the raw amino-acid sequence, 78 residues long: uncharacterized protein (78 aa).

A helical membrane pass occupies residues 21 to 43; it reads SPFLFGAPLVGGLLGGFLGSALF.

Its subcellular location is the membrane. This is an uncharacterized protein from Bacillus subtilis (strain 168).